Here is a 557-residue protein sequence, read N- to C-terminus: UvrABC system protein C (557 aa).

A GIY-YIG domain is found at 14-89 (EEPGVYIFKN…IKKYRPKYNV (76 aa)). The UVR domain maps to 194 to 229 (EEVFDYLKEKMETHSKMLDFENAAKYRDLLLNLSNV).

This sequence belongs to the UvrC family. Interacts with UvrB in an incision complex.

The protein resides in the cytoplasm. Its function is as follows. The UvrABC repair system catalyzes the recognition and processing of DNA lesions. UvrC both incises the 5' and 3' sides of the lesion. The N-terminal half is responsible for the 3' incision and the C-terminal half is responsible for the 5' incision. In Thermotoga sp. (strain RQ2), this protein is UvrABC system protein C.